The sequence spans 114 residues: Iron-sulfur cluster insertion protein ErpA (114 aa).

Iron-sulfur cluster is bound by residues cysteine 42, cysteine 106, and cysteine 108.

This sequence belongs to the HesB/IscA family. Homodimer. Iron-sulfur cluster serves as cofactor.

Functionally, required for insertion of 4Fe-4S clusters for at least IspG. This chain is Iron-sulfur cluster insertion protein ErpA, found in Klebsiella pneumoniae (strain 342).